Here is a 205-residue protein sequence, read N- to C-terminus: Guanylyl cyclase-activating protein 1 (205 aa).

Residue Gly2 is the site of N-myristoyl glycine attachment. Asn3 is subject to Deamidated asparagine. EF-hand domains are found at residues 14-49 (SSTECHQWYKKFMTECPSGQLTLYEFRQFFGLKNLS), 51-86 (WASQYVEQMFETFDFNKDGYIDFMEYVAALSLVLKG), 87-122 (KVEQKLRWYFKLYDVDGNGCIDRDELLTIIRAIRAI), and 131-166 (TAEEFTDTVFSKIDVNGDGELSLEEFMEGVQKDQML). Positions 64, 66, 68, 70, 75, 100, 102, 104, 106, 111, 144, 146, 148, 150, and 155 each coordinate Ca(2+). The tract at residues 185–205 (NGEQDEEGASGRETEAAEADG) is disordered.

Homodimer. As to expression, detected in the retina. Detected in rod and cone photoreceptor cells (at protein level). Also present in certain pinealocytes.

It is found in the membrane. The protein resides in the photoreceptor inner segment. The protein localises to the cell projection. Its subcellular location is the cilium. It localises to the photoreceptor outer segment. Functionally, stimulates retinal guanylyl cyclase when free calcium ions concentration is low and inhibits guanylyl cyclase when free calcium ions concentration is elevated. This Ca(2+)-sensitive regulation of retinal guanylyl cyclase is a key event in recovery of the dark state of rod photoreceptors following light exposure. May be involved in cone photoreceptor light response and recovery of response in bright light. This Bos taurus (Bovine) protein is Guanylyl cyclase-activating protein 1 (GUCA1A).